Consider the following 343-residue polypeptide: Glyceraldehyde-3-phosphate dehydrogenase (343 aa).

NAD(+)-binding positions include 13–14 (TI) and G111. Residue 140 to 142 (SCN) participates in D-glyceraldehyde 3-phosphate binding. The active-site Nucleophile is the C141. R169 provides a ligand contact to NAD(+). Position 195–196 (195–196 (HA)) interacts with D-glyceraldehyde 3-phosphate. Residue Q303 participates in NAD(+) binding.

It belongs to the glyceraldehyde-3-phosphate dehydrogenase family. As to quaternary structure, homotetramer.

The protein localises to the cytoplasm. It catalyses the reaction D-glyceraldehyde 3-phosphate + phosphate + NADP(+) = (2R)-3-phospho-glyceroyl phosphate + NADPH + H(+). The enzyme catalyses D-glyceraldehyde 3-phosphate + phosphate + NAD(+) = (2R)-3-phospho-glyceroyl phosphate + NADH + H(+). Its pathway is carbohydrate degradation; glycolysis; pyruvate from D-glyceraldehyde 3-phosphate: step 1/5. The protein is Glyceraldehyde-3-phosphate dehydrogenase of Sulfolobus acidocaldarius (strain ATCC 33909 / DSM 639 / JCM 8929 / NBRC 15157 / NCIMB 11770).